We begin with the raw amino-acid sequence, 58 residues long: UPF0391 membrane protein GM21_0108 (58 aa).

A run of 2 helical transmembrane segments spans residues 4 to 24 and 33 to 53; these read WALI…GGIA and VLFY…LLAG.

This sequence belongs to the UPF0391 family.

The protein localises to the cell membrane. This chain is UPF0391 membrane protein GM21_0108, found in Geobacter sp. (strain M21).